A 694-amino-acid chain; its full sequence is Elongation factor G (694 aa).

A tr-type G domain is found at 8 to 285; that stretch reads EKVRNIGIAA…AVVELLPSPQ (278 aa). GTP is bound by residues 17 to 24, 81 to 85, and 135 to 138; these read AHIDAGKT, DTPGH, and NKMD.

It belongs to the TRAFAC class translation factor GTPase superfamily. Classic translation factor GTPase family. EF-G/EF-2 subfamily.

It is found in the cytoplasm. Catalyzes the GTP-dependent ribosomal translocation step during translation elongation. During this step, the ribosome changes from the pre-translocational (PRE) to the post-translocational (POST) state as the newly formed A-site-bound peptidyl-tRNA and P-site-bound deacylated tRNA move to the P and E sites, respectively. Catalyzes the coordinated movement of the two tRNA molecules, the mRNA and conformational changes in the ribosome. The chain is Elongation factor G (fusA) from Synechococcus sp. (strain ATCC 27144 / PCC 6301 / SAUG 1402/1) (Anacystis nidulans).